Consider the following 555-residue polypeptide: Formate--tetrahydrofolate ligase (555 aa).

64-71 (TKAGIGKT) contributes to the ATP binding site.

This sequence belongs to the formate--tetrahydrofolate ligase family.

It catalyses the reaction (6S)-5,6,7,8-tetrahydrofolate + formate + ATP = (6R)-10-formyltetrahydrofolate + ADP + phosphate. Its pathway is one-carbon metabolism; tetrahydrofolate interconversion. The protein is Formate--tetrahydrofolate ligase of Bacteroides thetaiotaomicron (strain ATCC 29148 / DSM 2079 / JCM 5827 / CCUG 10774 / NCTC 10582 / VPI-5482 / E50).